Reading from the N-terminus, the 198-residue chain is Formate-dependent nitrite reductase complex subunit NrfG (198 aa).

TPR repeat units lie at residues 73 to 106 and 144 to 177; these read SEQW…RGEN and ITAL…NSPR.

Its function is as follows. Required for formate-dependent nitrite reduction. Not required for the biosynthesis of any of the c-type cytochromes nor for the secretion of the periplasmic cytochromes. The chain is Formate-dependent nitrite reductase complex subunit NrfG (nrfG) from Escherichia coli O157:H7.